The sequence spans 107 residues: MQGPVIIPLISTLGLSFLAILLAYKISFSVIGFINSTLPTTLFPSKPYMLFVKISTISPLTCPSLIILTPALTWSLTALSMAYLYSSYKPNTFFTLSKNVSSFLTTG.

Helical transmembrane passes span 3–23 (GPVI…ILLA) and 65–85 (LIIL…AYLY).

It localises to the cell membrane. Possibly the antitoxin component of a type II toxin-antitoxin (TA) system. Its cognate toxin is VapC5 (Potential). This is Putative antitoxin VapB5 (vapB5) from Methanocaldococcus jannaschii (strain ATCC 43067 / DSM 2661 / JAL-1 / JCM 10045 / NBRC 100440) (Methanococcus jannaschii).